The chain runs to 139 residues: uncharacterized protein (139 aa).

A helical membrane pass occupies residues 77–97 (YCFFFFLVLFLNGIIATRGKA).

It localises to the mitochondrion membrane. This is an uncharacterized protein from Arabidopsis thaliana (Mouse-ear cress).